The primary structure comprises 96 residues: Large ribosomal subunit protein uL23 (96 aa).

This sequence belongs to the universal ribosomal protein uL23 family. As to quaternary structure, part of the 50S ribosomal subunit. Contacts protein L29, and trigger factor when it is bound to the ribosome.

One of the early assembly proteins it binds 23S rRNA. One of the proteins that surrounds the polypeptide exit tunnel on the outside of the ribosome. Forms the main docking site for trigger factor binding to the ribosome. This is Large ribosomal subunit protein uL23 from Desulfovibrio desulfuricans (strain ATCC 27774 / DSM 6949 / MB).